The sequence spans 394 residues: Na(+)/H(+) antiporter NhaA (394 aa).

11 helical membrane passes run 11-31, 59-79, 95-115, 125-145, 155-175, 177-197, 203-220, 254-274, 296-316, 328-348, and 365-385; these read LEAA…IFAN, LLMW…GMEV, IFPA…YWFI, GWAI…ALLS, FLLA…ALFF, HEMS…LVAM, TGLI…ASVL, ALAP…NAGV, LIIG…LLGI, IFAI…IAGL, and LGIL…LKIT.

The protein belongs to the NhaA Na(+)/H(+) (TC 2.A.33) antiporter family.

It localises to the cell inner membrane. It carries out the reaction Na(+)(in) + 2 H(+)(out) = Na(+)(out) + 2 H(+)(in). In terms of biological role, na(+)/H(+) antiporter that extrudes sodium in exchange for external protons. The protein is Na(+)/H(+) antiporter NhaA of Actinobacillus pleuropneumoniae serotype 3 (strain JL03).